Reading from the N-terminus, the 201-residue chain is MKLYYKVGACSLAPHIILSEAGLPYELEAVDLKAKKTADGGDYFAVNPRGAVPALEVKPGTVITQNAAILQYIGDHSDVAAFKPAYGSIERARLQEALGFCSDLHAAFSGLFAPNLSEEARAGVIANINRRLGQLEAMLSDKNAYWLGDDFTQPDAYASVIIGWGVGQKLDLSAYPKALKLRERVLARPNVQKAFKEEGLN.

The GST N-terminal domain maps to 1–81 (MKLYYKVGAC…YIGDHSDVAA (81 aa)). Glutathione contacts are provided by residues Cys10, Lys35, Val52, 65–66 (QN), and 102–105 (SDLH). The GST C-terminal domain maps to 87-201 (GSIERARLQE…QKAFKEEGLN (115 aa)).

Belongs to the GST superfamily. Beta family. In terms of assembly, homodimer.

The protein resides in the cytoplasm. It catalyses the reaction RX + glutathione = an S-substituted glutathione + a halide anion + H(+). Conjugation of reduced glutathione to a wide number of exogenous and endogenous hydrophobic electrophiles. This chain is Glutathione S-transferase (gst), found in Brucella anthropi (Ochrobactrum anthropi).